Consider the following 207-residue polypeptide: Large ribosomal subunit protein uL3 (207 aa).

This sequence belongs to the universal ribosomal protein uL3 family. In terms of assembly, part of the 50S ribosomal subunit. Forms a cluster with proteins L14 and L19.

Functionally, one of the primary rRNA binding proteins, it binds directly near the 3'-end of the 23S rRNA, where it nucleates assembly of the 50S subunit. This Thermotoga maritima (strain ATCC 43589 / DSM 3109 / JCM 10099 / NBRC 100826 / MSB8) protein is Large ribosomal subunit protein uL3.